Here is a 463-residue protein sequence, read N- to C-terminus: Bifunctional protein HldE (463 aa).

The tract at residues 1–313 (MTGPMAVRTD…RALAALPDTD (313 aa)) is ribokinase. The active site involves aspartate 258. Residues 331–463 (AAGGCFDLLH…LLARAAEGAR (133 aa)) form a cytidylyltransferase region.

It in the N-terminal section; belongs to the carbohydrate kinase PfkB family. In the C-terminal section; belongs to the cytidylyltransferase family. In terms of assembly, homodimer.

It carries out the reaction D-glycero-beta-D-manno-heptose 7-phosphate + ATP = D-glycero-beta-D-manno-heptose 1,7-bisphosphate + ADP + H(+). The catalysed reaction is D-glycero-beta-D-manno-heptose 1-phosphate + ATP + H(+) = ADP-D-glycero-beta-D-manno-heptose + diphosphate. It participates in nucleotide-sugar biosynthesis; ADP-L-glycero-beta-D-manno-heptose biosynthesis; ADP-L-glycero-beta-D-manno-heptose from D-glycero-beta-D-manno-heptose 7-phosphate: step 1/4. The protein operates within nucleotide-sugar biosynthesis; ADP-L-glycero-beta-D-manno-heptose biosynthesis; ADP-L-glycero-beta-D-manno-heptose from D-glycero-beta-D-manno-heptose 7-phosphate: step 3/4. Catalyzes the phosphorylation of D-glycero-D-manno-heptose 7-phosphate at the C-1 position to selectively form D-glycero-beta-D-manno-heptose-1,7-bisphosphate. Functionally, catalyzes the ADP transfer from ATP to D-glycero-beta-D-manno-heptose 1-phosphate, yielding ADP-D-glycero-beta-D-manno-heptose. This is Bifunctional protein HldE from Streptomyces coelicolor (strain ATCC BAA-471 / A3(2) / M145).